Consider the following 264-residue polypeptide: MLARPDVFPGARAAACLTQFKRQSPLIHCLTNEVVQELTANVLLALGASPAMVVEPTEAAQFSRLADALLINIGTLNASRAESMLAAIEAANAAGTPWTLDPVAVGGLAYRTAFAQSLLGEKPAAIRGNASEIMALSGLQASGRGVDSADDSLAALPAARELARNSGAVVAVTGVVDYITDGQRDWAVAGGDVLMTRVVGTGCALSAVVAAFCSLPGDRLDNVATACRVMSHCGEMATRRAAGPGSFTPAFLDALYQLRPEDLQ.

Residue Met-52 participates in substrate binding. Residues Arg-127 and Thr-173 each coordinate ATP. Position 200 (Gly-200) interacts with substrate.

Belongs to the Thz kinase family. Mg(2+) serves as cofactor.

It catalyses the reaction 5-(2-hydroxyethyl)-4-methylthiazole + ATP = 4-methyl-5-(2-phosphooxyethyl)-thiazole + ADP + H(+). It functions in the pathway cofactor biosynthesis; thiamine diphosphate biosynthesis; 4-methyl-5-(2-phosphoethyl)-thiazole from 5-(2-hydroxyethyl)-4-methylthiazole: step 1/1. Catalyzes the phosphorylation of the hydroxyl group of 4-methyl-5-beta-hydroxyethylthiazole (THZ). This Serratia proteamaculans (strain 568) protein is Hydroxyethylthiazole kinase.